Reading from the N-terminus, the 454-residue chain is Pup--protein ligase (454 aa).

Position 9 (glutamate 9) interacts with Mg(2+). ATP is bound at residue arginine 53. Tyrosine 55 is a binding site for Mg(2+). Catalysis depends on aspartate 57, which acts as the Proton acceptor. Glutamate 63 serves as a coordination point for Mg(2+). Residues threonine 66 and tryptophan 420 each contribute to the ATP site.

Belongs to the Pup ligase/Pup deamidase family. Pup-conjugating enzyme subfamily.

The enzyme catalyses ATP + [prokaryotic ubiquitin-like protein]-L-glutamate + [protein]-L-lysine = ADP + phosphate + N(6)-([prokaryotic ubiquitin-like protein]-gamma-L-glutamyl)-[protein]-L-lysine.. Its pathway is protein degradation; proteasomal Pup-dependent pathway. The protein operates within protein modification; protein pupylation. Functionally, catalyzes the covalent attachment of the prokaryotic ubiquitin-like protein modifier Pup to the proteasomal substrate proteins, thereby targeting them for proteasomal degradation. This tagging system is termed pupylation. The ligation reaction involves the side-chain carboxylate of the C-terminal glutamate of Pup and the side-chain amino group of a substrate lysine. The chain is Pup--protein ligase from Arthrobacter sp. (strain FB24).